A 536-amino-acid chain; its full sequence is Chlorophyllide a oxygenase, chloroplastic (536 aa).

The N-terminal 36 residues, Met1–Arg36, are a transit peptide targeting the chloroplast. A coiled-coil region spans residues Ile123–Arg150. In terms of domain architecture, Rieske spans Trp221–Ile321. Positions 262, 264, 281, and 284 each coordinate [2Fe-2S] cluster. Residues Asp360, Asp364, His367, and His372 each coordinate Fe cation.

Its subcellular location is the plastid. It localises to the chloroplast membrane. The protein localises to the chloroplast thylakoid membrane. The catalysed reaction is chlorophyllide a + 2 NADPH + 2 O2 + 2 H(+) = chlorophyllide b + 2 NADP(+) + 3 H2O. Its pathway is porphyrin-containing compound metabolism; chlorophyll biosynthesis. In terms of biological role, catalyzes a two-step oxygenase reaction involved in the synthesis of chlorophyll b. Acts specifically on the non-esterified chlorophyllide a and not on chlorophyll a. This is Chlorophyllide a oxygenase, chloroplastic (CAO) from Arabidopsis thaliana (Mouse-ear cress).